A 336-amino-acid chain; its full sequence is Holliday junction branch migration complex subunit RuvB (336 aa).

Residues 4–184 (ADRLISASGG…FGIVQRLEFY (181 aa)) are large ATPase domain (RuvB-L). Residues Ile23, Arg24, Gly65, Lys68, Thr69, Thr70, 131-133 (EDY), Arg174, Tyr184, and Arg221 contribute to the ATP site. Residue Thr69 coordinates Mg(2+). Residues 185 to 255 (NVKDLTDIVA…IAARAMDMLD (71 aa)) form a small ATPAse domain (RuvB-S) region. The head domain (RuvB-H) stretch occupies residues 258-336 (NEGFDFMDRK…HFGLQRPDEG (79 aa)). Positions 313 and 318 each coordinate DNA.

This sequence belongs to the RuvB family. Homohexamer. Forms an RuvA(8)-RuvB(12)-Holliday junction (HJ) complex. HJ DNA is sandwiched between 2 RuvA tetramers; dsDNA enters through RuvA and exits via RuvB. An RuvB hexamer assembles on each DNA strand where it exits the tetramer. Each RuvB hexamer is contacted by two RuvA subunits (via domain III) on 2 adjacent RuvB subunits; this complex drives branch migration. In the full resolvosome a probable DNA-RuvA(4)-RuvB(12)-RuvC(2) complex forms which resolves the HJ.

It localises to the cytoplasm. The catalysed reaction is ATP + H2O = ADP + phosphate + H(+). In terms of biological role, the RuvA-RuvB-RuvC complex processes Holliday junction (HJ) DNA during genetic recombination and DNA repair, while the RuvA-RuvB complex plays an important role in the rescue of blocked DNA replication forks via replication fork reversal (RFR). RuvA specifically binds to HJ cruciform DNA, conferring on it an open structure. The RuvB hexamer acts as an ATP-dependent pump, pulling dsDNA into and through the RuvAB complex. RuvB forms 2 homohexamers on either side of HJ DNA bound by 1 or 2 RuvA tetramers; 4 subunits per hexamer contact DNA at a time. Coordinated motions by a converter formed by DNA-disengaged RuvB subunits stimulates ATP hydrolysis and nucleotide exchange. Immobilization of the converter enables RuvB to convert the ATP-contained energy into a lever motion, pulling 2 nucleotides of DNA out of the RuvA tetramer per ATP hydrolyzed, thus driving DNA branch migration. The RuvB motors rotate together with the DNA substrate, which together with the progressing nucleotide cycle form the mechanistic basis for DNA recombination by continuous HJ branch migration. Branch migration allows RuvC to scan DNA until it finds its consensus sequence, where it cleaves and resolves cruciform DNA. In Aeromonas hydrophila subsp. hydrophila (strain ATCC 7966 / DSM 30187 / BCRC 13018 / CCUG 14551 / JCM 1027 / KCTC 2358 / NCIMB 9240 / NCTC 8049), this protein is Holliday junction branch migration complex subunit RuvB.